The chain runs to 438 residues: Ribosomal protein uS12 methylthiotransferase RimO (438 aa).

Residues 4 to 120 (HSLFLLSLGC…ILASLGARYR (117 aa)) enclose the MTTase N-terminal domain. [4Fe-4S] cluster-binding residues include cysteine 13, cysteine 49, cysteine 83, cysteine 144, cysteine 148, and cysteine 151. The 230-residue stretch at 130 to 359 (LTPSHYAYLK…MELQEAVAES (230 aa)) folds into the Radical SAM core domain. The region spanning 362 to 429 (REFEGKEIEV…AHELYGEIVQ (68 aa)) is the TRAM domain.

This sequence belongs to the methylthiotransferase family. RimO subfamily. It depends on [4Fe-4S] cluster as a cofactor.

The protein resides in the cytoplasm. It catalyses the reaction L-aspartate(89)-[ribosomal protein uS12]-hydrogen + (sulfur carrier)-SH + AH2 + 2 S-adenosyl-L-methionine = 3-methylsulfanyl-L-aspartate(89)-[ribosomal protein uS12]-hydrogen + (sulfur carrier)-H + 5'-deoxyadenosine + L-methionine + A + S-adenosyl-L-homocysteine + 2 H(+). Catalyzes the methylthiolation of an aspartic acid residue of ribosomal protein uS12. The sequence is that of Ribosomal protein uS12 methylthiotransferase RimO from Chlorobium chlorochromatii (strain CaD3).